The chain runs to 453 residues: Nuclear hormone receptor family member nhr-12 (453 aa).

A disordered region spans residues 1–37; sequence MEQIPQEQKTEPFLASFTTTEKLGTETPTTSITPNTQ. Over residues 18 to 36 the composition is skewed to low complexity; sequence TTTEKLGTETPTTSITPNT. A DNA-binding region (nuclear receptor) is located at residues 44 to 119; it reads KPNCAVCNEV…VGMNPECVQN (76 aa). 2 consecutive NR C4-type zinc fingers follow at residues 47 to 67 and 83 to 107; these read CAVC…CRAC and CRAG…YDKC. An NR LBD domain is found at 178–451; sequence FSPASLPGLS…ENFVNIINGK (274 aa).

Belongs to the nuclear hormone receptor family.

The protein resides in the nucleus. In terms of biological role, orphan nuclear receptor. This Caenorhabditis elegans protein is Nuclear hormone receptor family member nhr-12 (nhr-12).